The sequence spans 158 residues: MSDTMQSLDQLSALKTAAPDAPKREKKVDKQGRAYATGKRKDAVARVWIKPGSGKIVVNTRDVEVYFARPVLRMLIQQPIVAAARQGQYDVVATVAGGGLSGQAGAVRHGISKALTHFEPDLRGVLKKGGFLTRDSRVVERKKYGKAKARRSFQFSKR.

Residues 1–10 (MSDTMQSLDQ) are compositionally biased toward polar residues. The tract at residues 1–35 (MSDTMQSLDQLSALKTAAPDAPKREKKVDKQGRAY) is disordered. Over residues 21–32 (APKREKKVDKQG) the composition is skewed to basic and acidic residues.

This sequence belongs to the universal ribosomal protein uS9 family.

In Afipia carboxidovorans (strain ATCC 49405 / DSM 1227 / KCTC 32145 / OM5) (Oligotropha carboxidovorans), this protein is Small ribosomal subunit protein uS9.